We begin with the raw amino-acid sequence, 46 residues long: Protein PsbN (46 aa).

The chain crosses the membrane as a helical span at residues 10–30; that stretch reads LIITILAVTIAFTAVSLYTAF.

It belongs to the PsbN family.

The protein resides in the cellular thylakoid membrane. In terms of biological role, may play a role in photosystem I and II biogenesis. In Acaryochloris marina (strain MBIC 11017), this protein is Protein PsbN.